Here is a 382-residue protein sequence, read N- to C-terminus: MKAIHFGAGNIGRGFIGKVLSDAGIKVTFADVNKTVVNALIARNEYDVNVVGADCVVEKVTNVTAVNSAGSEIVKLIAESDLVTTAVGPTVLNIIAKTIADAIELRLNSGNKFPLNIIACENMVRGTSQLKAQVFKYLPESLHVQSDQTIGFVDCAVDRIVPPAEAGETDPLAVTVETFSEWIVDQTQFKGEIPTIKGMECTDNLMAFVERKLFTLNTGHLITAYLGVLAGYETIKESIEDEAIRSDVTAAMQESGEVLIRRYGFDPQAHAAYIQKILGRFANPYLRDEVDRVGRQPIRKLSANDRLIKPLNGTLEYGLPNGHLIKGIAAAFLYKNDQDPQAVELQAMFAEKGLAATLAHYSGLAVDSETVKLVEQAYQSLK.

An NAD(+)-binding site is contributed by 3–14 (AIHFGAGNIGRG).

Belongs to the mannitol dehydrogenase family.

It catalyses the reaction D-mannitol 1-phosphate + NAD(+) = beta-D-fructose 6-phosphate + NADH + H(+). In Psychromonas ingrahamii (strain DSM 17664 / CCUG 51855 / 37), this protein is Mannitol-1-phosphate 5-dehydrogenase.